Reading from the N-terminus, the 225-residue chain is Transcriptional regulatory protein CssR (225 aa).

Residues 4 to 117 (TIYLVEDEDN…ELIIRVQKLL (114 aa)) form the Response regulatory domain. At aspartate 52 the chain carries 4-aspartylphosphate. A DNA-binding region (ompR/PhoB-type) is located at residues 129-224 (KNEIAVSSYR…IYGFGYRMMS (96 aa)).

Phosphorylated by CssS.

It is found in the cytoplasm. Its function is as follows. Member of the two-component regulatory system CssS/CssR required to control the cellular response to secretion stress. This is Transcriptional regulatory protein CssR (cssR) from Bacillus subtilis (strain 168).